The following is a 187-amino-acid chain: Cytochrome b-245 chaperone 1 (187 aa).

The chain crosses the membrane as a helical span at residues 20 to 42 (GIRSWSLLVGILSIGLAAAYYSG). Ser168 bears the Phosphoserine mark.

Belongs to the CYBC1 family. As to quaternary structure, interacts with CYBB; CYBC1 may act as a chaperone stabilizing Cytochrome b-245 heterodimer.

The protein localises to the endoplasmic reticulum membrane. Functionally, functions as a chaperone necessary for a stable expression of the CYBA and CYBB subunits of the cytochrome b-245 heterodimer. Controls the phagocyte respiratory burst and is essential for innate immunity. The polypeptide is Cytochrome b-245 chaperone 1 (Bos taurus (Bovine)).